The chain runs to 452 residues: Bifunctional protein GlmU (452 aa).

The tract at residues 1–233 (MTDRPFAALI…AWEVAGVNSR (233 aa)) is pyrophosphorylase. UDP-N-acetyl-alpha-D-glucosamine is bound by residues 11–14 (LAAG), K25, Q76, 81–82 (GT), 104–106 (YGD), G144, E159, N174, and N231. D106 lines the Mg(2+) pocket. Residue N231 participates in Mg(2+) binding. Residues 234–254 (AELAAVEAEWQRRRRLAAMAD) form a linker region. The segment at 255-452 (GATLIAPETV…AMKIKKAARK (198 aa)) is N-acetyltransferase. UDP-N-acetyl-alpha-D-glucosamine is bound by residues R320 and K338. H350 functions as the Proton acceptor in the catalytic mechanism. Residues Y353 and N364 each contribute to the UDP-N-acetyl-alpha-D-glucosamine site. Residues A367, 373 to 374 (NY), S392, A410, and R427 each bind acetyl-CoA.

In the N-terminal section; belongs to the N-acetylglucosamine-1-phosphate uridyltransferase family. This sequence in the C-terminal section; belongs to the transferase hexapeptide repeat family. Homotrimer. Requires Mg(2+) as cofactor.

The protein resides in the cytoplasm. The enzyme catalyses alpha-D-glucosamine 1-phosphate + acetyl-CoA = N-acetyl-alpha-D-glucosamine 1-phosphate + CoA + H(+). The catalysed reaction is N-acetyl-alpha-D-glucosamine 1-phosphate + UTP + H(+) = UDP-N-acetyl-alpha-D-glucosamine + diphosphate. It functions in the pathway nucleotide-sugar biosynthesis; UDP-N-acetyl-alpha-D-glucosamine biosynthesis; N-acetyl-alpha-D-glucosamine 1-phosphate from alpha-D-glucosamine 6-phosphate (route II): step 2/2. The protein operates within nucleotide-sugar biosynthesis; UDP-N-acetyl-alpha-D-glucosamine biosynthesis; UDP-N-acetyl-alpha-D-glucosamine from N-acetyl-alpha-D-glucosamine 1-phosphate: step 1/1. Its pathway is bacterial outer membrane biogenesis; LPS lipid A biosynthesis. Catalyzes the last two sequential reactions in the de novo biosynthetic pathway for UDP-N-acetylglucosamine (UDP-GlcNAc). The C-terminal domain catalyzes the transfer of acetyl group from acetyl coenzyme A to glucosamine-1-phosphate (GlcN-1-P) to produce N-acetylglucosamine-1-phosphate (GlcNAc-1-P), which is converted into UDP-GlcNAc by the transfer of uridine 5-monophosphate (from uridine 5-triphosphate), a reaction catalyzed by the N-terminal domain. This chain is Bifunctional protein GlmU, found in Rhizorhabdus wittichii (strain DSM 6014 / CCUG 31198 / JCM 15750 / NBRC 105917 / EY 4224 / RW1) (Sphingomonas wittichii).